Reading from the N-terminus, the 362-residue chain is Outer mitochondrial transmembrane helix translocase (362 aa).

Residues 1–19 (MVLKEIPTENITRPLGRNE) lie on the Mitochondrial intermembrane side of the membrane. Residues 20–42 (VIGLLFRLTIFGAVTYFTIKWMV) form a helical membrane-spanning segment. Residues 43–362 (DAIDPTRKQK…HEAFMQVPLD (320 aa)) are Cytoplasmic-facing. 137-144 (GPPGCGKT) lines the ATP pocket.

It belongs to the AAA ATPase family. MSP1 subfamily.

The protein localises to the mitochondrion outer membrane. Its subcellular location is the peroxisome membrane. It localises to the postsynaptic cell membrane. It catalyses the reaction [protein]-with a C-terminal TM segment(out) + ATP + H2O = [protein]-with a C-terminal TM segment(in) + ADP + phosphate + H(+). Its function is as follows. Outer mitochondrial translocase required to remove mislocalized tail-anchored transmembrane proteins on mitochondria. Specifically recognizes and binds tail-anchored transmembrane proteins: acts as a dislocase that mediates the ATP-dependent extraction of mistargeted tail-anchored transmembrane proteins from the mitochondrion outer membrane. Also plays a critical role in regulating the surface expression of AMPA receptors (AMPAR), thereby regulating synaptic plasticity and learning and memory. This chain is Outer mitochondrial transmembrane helix translocase, found in Danio rerio (Zebrafish).